The primary structure comprises 478 residues: Glutamate--tRNA ligase 1 (478 aa).

The 'HIGH' region signature appears at 10–20; it reads PSPTGFLHIGG. The 'KMSKS' region signature appears at 242 to 246; that stretch reads KLSKR. Lys-245 is an ATP binding site.

It belongs to the class-I aminoacyl-tRNA synthetase family. Glutamate--tRNA ligase type 1 subfamily. In terms of assembly, monomer.

The protein localises to the cytoplasm. It carries out the reaction tRNA(Glu) + L-glutamate + ATP = L-glutamyl-tRNA(Glu) + AMP + diphosphate. In terms of biological role, catalyzes the attachment of glutamate to tRNA(Glu) in a two-step reaction: glutamate is first activated by ATP to form Glu-AMP and then transferred to the acceptor end of tRNA(Glu). This is Glutamate--tRNA ligase 1 from Orientia tsutsugamushi (strain Boryong) (Rickettsia tsutsugamushi).